The chain runs to 247 residues: Bidirectional sugar transporter SWEET1 (247 aa).

The Extracellular portion of the chain corresponds to 1–6 (MNIAHT). Residues 7-27 (IFGVFGNATALFLFLAPSITF) traverse the membrane as a helical segment. Positions 7-94 (IFGVFGNATA…LIFLFYAPKK (88 aa)) constitute a MtN3/slv 1 domain. Residues 28–41 (KRIIKNKSTEQFSG) lie on the Cytoplasmic side of the membrane. The chain crosses the membrane as a helical span at residues 42–62 (IPYPMTLLNCLLSAWYGLPFV). Topologically, residues 63 to 71 (SKDNTLVST) are extracellular. Residues 72–92 (INGTGAVIETVYVLIFLFYAP) traverse the membrane as a helical segment. Topologically, residues 93-98 (KKEKIK) are cytoplasmic. A helical transmembrane segment spans residues 99 to 119 (IFGIFSCVLAVFATVALVSLF). Residues 120–127 (ALQGNGRK) lie on the Extracellular side of the membrane. A helical transmembrane segment spans residues 128 to 148 (LFCGLAATVFSIIMYASPLSI). One can recognise a MtN3/slv 2 domain in the interval 130–213 (CGLAATVFSI…ILYFIYCGNK (84 aa)). The Cytoplasmic segment spans residues 149–162 (MRLVVKTKSVEFMP). A helical membrane pass occupies residues 163-183 (FFLSLFVFLCGTSWFVYGLIG). Residues 184–187 (RDPF) are Extracellular-facing. The chain crosses the membrane as a helical span at residues 188-208 (VAIPNGFGCALGTLQLILYFI). Over 209–247 (YCGNKGEKSADAQKDEKSVEMKDDEKKQNVVNGKQDLQV) the chain is Cytoplasmic. The segment covering 221–236 (QKDEKSVEMKDDEKKQ) has biased composition (basic and acidic residues). Residues 221-247 (QKDEKSVEMKDDEKKQNVVNGKQDLQV) form a disordered region. The segment covering 237–247 (NVVNGKQDLQV) has biased composition (polar residues).

This sequence belongs to the SWEET sugar transporter family. As to quaternary structure, forms homooligomers and heterooligomers with SWEET9, SWEET11, SWEET13, SWEET15, SWEET16 and SWEET17. In terms of tissue distribution, mainly expressed in flowers.

It is found in the cell membrane. The protein localises to the endoplasmic reticulum membrane. In terms of biological role, mediates both low-affinity uptake and efflux of sugar across the plasma membrane. Can transport glucose, and, to a lower extent, mannose, fructose and galactose. The protein is Bidirectional sugar transporter SWEET1 of Arabidopsis thaliana (Mouse-ear cress).